Reading from the N-terminus, the 369-residue chain is Zeaxanthin 7,8(7',8')-cleavage dioxygenase, chromoplastic (369 aa).

Fe cation is bound by residues histidine 62, histidine 112, histidine 177, and histidine 356.

Belongs to the carotenoid oxygenase family. The cofactor is Fe(2+). In terms of tissue distribution, in the style branches.

The protein resides in the plastid. The protein localises to the chromoplast. It carries out the reaction all-trans-zeaxanthin + 2 O2 = crocetin dialdehyde + 2 3beta-hydroxy-beta-cyclocitral. Functionally, cleaves zeaxanthin symmetrically at the 7-8 and 7'-8' double bonds to produce crocetin dialdehyde and hydroxy-beta-cyclocitral, two water-soluble precursors sequestred in vacuoles and involved in the synthesis of saffron pigment and aroma. This chain is Zeaxanthin 7,8(7',8')-cleavage dioxygenase, chromoplastic (ZCD), found in Crocus sativus (Saffron).